A 408-amino-acid polypeptide reads, in one-letter code: uncharacterized protein (408 aa).

Residues 376-386 (NELNDPNSVYN) are compositionally biased toward polar residues. Residues 376-408 (NELNDPNSVYNSPEFDHQGDQKKLTEENGCVVQ) form a disordered region. Basic and acidic residues predominate over residues 389 to 401 (EFDHQGDQKKLTE).

This is an uncharacterized protein from Acanthamoeba polyphaga (Amoeba).